Reading from the N-terminus, the 267-residue chain is Regulatory protein RecX (267 aa).

It belongs to the RecX family.

The protein resides in the cytoplasm. In terms of biological role, modulates RecA activity. This chain is Regulatory protein RecX, found in Leuconostoc mesenteroides subsp. mesenteroides (strain ATCC 8293 / DSM 20343 / BCRC 11652 / CCM 1803 / JCM 6124 / NCDO 523 / NBRC 100496 / NCIMB 8023 / NCTC 12954 / NRRL B-1118 / 37Y).